A 401-amino-acid polypeptide reads, in one-letter code: Probable tRNA sulfurtransferase (401 aa).

Residues 60–165 (EAVMARLKHV…EDATYLTFRD (106 aa)) enclose the THUMP domain. Residues 183 to 184 (MI), 208 to 209 (HF), R265, G287, and Q296 contribute to the ATP site.

It belongs to the ThiI family.

Its subcellular location is the cytoplasm. The catalysed reaction is [ThiI sulfur-carrier protein]-S-sulfanyl-L-cysteine + a uridine in tRNA + 2 reduced [2Fe-2S]-[ferredoxin] + ATP + H(+) = [ThiI sulfur-carrier protein]-L-cysteine + a 4-thiouridine in tRNA + 2 oxidized [2Fe-2S]-[ferredoxin] + AMP + diphosphate. The enzyme catalyses [ThiS sulfur-carrier protein]-C-terminal Gly-Gly-AMP + S-sulfanyl-L-cysteinyl-[cysteine desulfurase] + AH2 = [ThiS sulfur-carrier protein]-C-terminal-Gly-aminoethanethioate + L-cysteinyl-[cysteine desulfurase] + A + AMP + 2 H(+). It participates in cofactor biosynthesis; thiamine diphosphate biosynthesis. In terms of biological role, catalyzes the ATP-dependent transfer of a sulfur to tRNA to produce 4-thiouridine in position 8 of tRNAs, which functions as a near-UV photosensor. Also catalyzes the transfer of sulfur to the sulfur carrier protein ThiS, forming ThiS-thiocarboxylate. This is a step in the synthesis of thiazole, in the thiamine biosynthesis pathway. The sulfur is donated as persulfide by IscS. The protein is Probable tRNA sulfurtransferase of Bacillus licheniformis (strain ATCC 14580 / DSM 13 / JCM 2505 / CCUG 7422 / NBRC 12200 / NCIMB 9375 / NCTC 10341 / NRRL NRS-1264 / Gibson 46).